Here is a 184-residue protein sequence, read N- to C-terminus: Large ribosomal subunit protein eL13 (184 aa).

Residues 28-53 are disordered; the sequence is PARKERRRQARKAKAQRIAPRPASGP. A compositionally biased stretch (basic residues) spans 31–42; it reads KERRRQARKAKA.

Belongs to the eukaryotic ribosomal protein eL13 family.

This is Large ribosomal subunit protein eL13 (RPL13) from Schistosoma mansoni (Blood fluke).